The sequence spans 139 residues: Large ribosomal subunit protein uL16 (139 aa).

Belongs to the universal ribosomal protein uL16 family. As to quaternary structure, part of the 50S ribosomal subunit.

In terms of biological role, binds 23S rRNA and is also seen to make contacts with the A and possibly P site tRNAs. The protein is Large ribosomal subunit protein uL16 of Microcystis aeruginosa (strain NIES-843 / IAM M-2473).